The sequence spans 153 residues: Insulin-like growth factor 1 (153 aa).

Positions 49 to 77 are b; sequence GPETLCGAELVDALQFVCGPRGFYFNKPT. Intrachain disulfides connect Cys54–Cys96, Cys66–Cys109, and Cys95–Cys100. The segment at 78–89 is c; it reads GYGSSIRRAPQT. An a region spans residues 90–110; it reads GIVDECCFRSCDLRRLEMYCA. Positions 111–118 are d; it reads PLKPTKSA. The propeptide at 119–153 is e peptide; sequence RSIRAQRHTDMPKTQKEVHLKNTSRGSAGNKTYRM. A disordered region spans residues 119 to 153; sequence RSIRAQRHTDMPKTQKEVHLKNTSRGSAGNKTYRM. The segment covering 125–138 has biased composition (basic and acidic residues); that stretch reads RHTDMPKTQKEVHL. Polar residues predominate over residues 139-153; the sequence is KNTSRGSAGNKTYRM.

Belongs to the insulin family. As to quaternary structure, forms a ternary complex with IGFR1 and ITGAV:ITGB3. Forms a ternary complex with IGFR1 and ITGA6:ITGB4. Forms a ternary complex with IGFBP3 and ALS.

It localises to the secreted. In terms of biological role, the insulin-like growth factors, isolated from plasma, are structurally and functionally related to insulin but have a much higher growth-promoting activity. May be a physiological regulator of [1-14C]-2-deoxy-D-glucose (2DG) transport and glycogen synthesis in osteoblasts. Stimulates glucose transport in bone-derived osteoblastic (PyMS) cells and is effective at much lower concentrations than insulin, not only regarding glycogen and DNA synthesis but also with regard to enhancing glucose uptake. May play a role in synapse maturation. Ca(2+)-dependent exocytosis of IGF1 is required for sensory perception of smell in the olfactory bulb. Acts as a ligand for IGF1R. Binds to the alpha subunit of IGF1R, leading to the activation of the intrinsic tyrosine kinase activity which autophosphorylates tyrosine residues in the beta subunit thus initiating a cascade of down-stream signaling events leading to activation of the PI3K-AKT/PKB and the Ras-MAPK pathways. Binds to integrins ITGAV:ITGB3 and ITGA6:ITGB4. Its binding to integrins and subsequent ternary complex formation with integrins and IGFR1 are essential for IGF1 signaling. Induces the phosphorylation and activation of IGFR1, MAPK3/ERK1, MAPK1/ERK2 and AKT1. As part of the MAPK/ERK signaling pathway, acts as a negative regulator of apoptosis in cardiomyocytes via promotion of STUB1/CHIP-mediated ubiquitination and degradation of ICER-type isoforms of CREM. The protein is Insulin-like growth factor 1 of Rattus norvegicus (Rat).